The sequence spans 255 residues: Imidazole glycerol phosphate synthase subunit HisF (255 aa).

Active-site residues include D11 and D130.

It belongs to the HisA/HisF family. In terms of assembly, heterodimer of HisH and HisF.

The protein localises to the cytoplasm. It catalyses the reaction 5-[(5-phospho-1-deoxy-D-ribulos-1-ylimino)methylamino]-1-(5-phospho-beta-D-ribosyl)imidazole-4-carboxamide + L-glutamine = D-erythro-1-(imidazol-4-yl)glycerol 3-phosphate + 5-amino-1-(5-phospho-beta-D-ribosyl)imidazole-4-carboxamide + L-glutamate + H(+). It participates in amino-acid biosynthesis; L-histidine biosynthesis; L-histidine from 5-phospho-alpha-D-ribose 1-diphosphate: step 5/9. IGPS catalyzes the conversion of PRFAR and glutamine to IGP, AICAR and glutamate. The HisF subunit catalyzes the cyclization activity that produces IGP and AICAR from PRFAR using the ammonia provided by the HisH subunit. This is Imidazole glycerol phosphate synthase subunit HisF from Campylobacter jejuni subsp. jejuni serotype O:6 (strain 81116 / NCTC 11828).